A 372-amino-acid polypeptide reads, in one-letter code: Pepsin A (372 aa).

The propeptide at 1–42 (MSVVKIPLVKKKSLRQNLIENGKLKEFMRTHKYNLGSKYIRE) is activation peptide. Residues 60–369 (YFGTIGIGTP…DRGNNQIGLA (310 aa)) enclose the Peptidase A1 domain. Residue aspartate 78 is part of the active site. A disulfide bond links cysteine 91 and cysteine 96. Serine 114 bears the Phosphoserine mark. A disulfide bridge connects residues cysteine 252 and cysteine 256. Residue aspartate 261 is part of the active site. A disulfide bond links cysteine 295 and cysteine 328.

It belongs to the peptidase A1 family.

It localises to the secreted. The catalysed reaction is Preferential cleavage: hydrophobic, preferably aromatic, residues in P1 and P1' positions. Cleaves 1-Phe-|-Val-2, 4-Gln-|-His-5, 13-Glu-|-Ala-14, 14-Ala-|-Leu-15, 15-Leu-|-Tyr-16, 16-Tyr-|-Leu-17, 23-Gly-|-Phe-24, 24-Phe-|-Phe-25 and 25-Phe-|-Tyr-26 bonds in the B chain of insulin.. In terms of biological role, shows particularly broad specificity; although bonds involving phenylalanine and leucine are preferred, many others are also cleaved to some extent. This Bos taurus (Bovine) protein is Pepsin A (PGA).